The chain runs to 1940 residues: Cilia- and flagella-associated protein 74 (1940 aa).

The segment at 52–90 is disordered; that stretch reads GSPAVTLRRAKAAAAANGTSSPGIRGSPSPARGPGGRLP. Positions 63–90 are enriched in low complexity; sequence AAAAANGTSSPGIRGSPSPARGPGGRLP. The stretch at 100-159 forms a coiled coil; that stretch reads ANVEQLKRRLQTVVAEVEGHQQRYDKVLLEANKATDLVHSMEAEIESLYVEAEELARRVP. Disordered regions lie at residues 512-548, 1159-1336, 1373-1418, 1714-1737, and 1894-1940; these read VAGL…QSLT, SPHV…AAAE, PQSQ…AAPP, AGDK…GASK, and PGSR…KKAV. Low complexity predominate over residues 535-548; the sequence is SLTQQLAATQQSLT. A compositionally biased stretch (gly residues) spans 1205–1220; the sequence is DGGGGGAMANGNGSGG. The segment covering 1227–1236 has biased composition (acidic residues); the sequence is DGEPEDGEGD. The span at 1260–1271 shows a compositional bias: gly residues; the sequence is GRGGRGGRGGAA. Positions 1272-1282 are enriched in acidic residues; it reads GEDEDEDEDAG. Residues 1287-1304 are compositionally biased toward low complexity; the sequence is RGKSSSSSKASSGRRSSS. The span at 1321-1335 shows a compositional bias: acidic residues; it reads VPDDDDADAEAEAAA. Over residues 1373-1414 the composition is skewed to low complexity; it reads PQSQNPTPSQSQSGQAPAASAPSDGASGAAAAAETAASSGPA. 2 stretches are compositionally biased toward pro residues: residues 1720–1731 and 1896–1912; these read TPAPGIKPPATP and SRPP…PAPE. Residues 1913-1929 are compositionally biased toward low complexity; the sequence is PVAASGPGAGAAGVKKL. Residues 1930-1940 are compositionally biased toward pro residues; that stretch reads VPPPSPPKKAV.

The protein belongs to the CFAP74 family. As to quaternary structure, part of the PDCP1 complex composed of CFAP46, CFAP54, CFAP74 and CFAP221; the PDCP1 complex binds calmodulin.

The protein localises to the cytoplasm. The protein resides in the cytoskeleton. It is found in the cilium axoneme. Its function is as follows. As part of the central apparatus of the cilium axoneme may play a role in cilium movement and thereby cell motility. The polypeptide is Cilia- and flagella-associated protein 74 (Chlamydomonas reinhardtii (Chlamydomonas smithii)).